The primary structure comprises 386 residues: Caspase-1-A (386 aa).

Positions 1 to 100 are excised as a propeptide; that stretch reads MTAQLNKVRR…PPMAPVPIQE (100 aa). In terms of domain architecture, CARD spans 22-88; that stretch reads SDLLDDLREK…HKTLAKSLGL (67 aa). Residues His-218 and Cys-274 contribute to the active site. The propeptide occupies 287-296; that stretch reads DVASPPLEDD.

The protein belongs to the peptidase C14A family. As to quaternary structure, heterotetramer that consists of two anti-parallel arranged heterodimers, each one formed by a 20 kDa (Caspase-1 subunit p20) and a 10 kDa (Caspase-1 subunit p10) subunit. Heterotetramer that consists of two anti-parallel arranged heterodimers, each one formed by a 20 kDa (Caspase-1 subunit p20) and a 10 kDa (Caspase-1 subunit p10) subunit. Can form a heterodimer with isoform epsilon which then has an inhibitory effect. Post-translationally, the two subunits are derived from the precursor sequence by an autocatalytic mechanism.

Its subcellular location is the cytoplasm. It is found in the cell membrane. The enzyme catalyses Strict requirement for an Asp residue at position P1 and has a preferred cleavage sequence of Tyr-Val-Ala-Asp-|-.. Thiol protease involved in a variety of inflammatory processes by proteolytically cleaving other proteins, such as the precursors of the inflammatory cytokines interleukin-1 beta (IL1B) and interleukin 18 (IL18) as well as the pyroptosis inducer Gasdermin-D (GSDMD), into active mature peptides. Plays a key role in cell immunity as an inflammatory response initiator: once activated through formation of an inflammasome complex, it initiates a pro-inflammatory response through the cleavage of the two inflammatory cytokines IL1B and IL18, releasing the mature cytokines which are involved in a variety of inflammatory processes. Cleaves a tetrapeptide after an Asp residue at position P1. Also initiates pyroptosis, a programmed lytic cell death pathway, through cleavage of GSDMD. The protein is Caspase-1-A (casp1-a) of Xenopus laevis (African clawed frog).